The following is a 169-amino-acid chain: Methanogen homoaconitase small subunit (169 aa).

The YLRT motif lies at 27 to 30; it reads YLRT.

It belongs to the LeuD family. LeuD type 2 subfamily. As to quaternary structure, heterotetramer of 2 HacA and 2 HacB proteins.

The catalysed reaction is (2R)-homocitrate = (2R,3S)-homoisocitrate. It catalyses the reaction (2R)-homocitrate = cis-homoaconitate + H2O. The enzyme catalyses (2R,3S)-homoisocitrate = cis-homoaconitate + H2O. It carries out the reaction cis-(homo)2aconitate + H2O = (2R,3S)-iso(homo)2citrate. The catalysed reaction is cis-(homo)3aconitate + H2O = (2R,3S)-iso(homo)3citrate. Its pathway is organic acid metabolism; 2-oxosuberate biosynthesis. Its function is as follows. Component of a hydro-lyase with broad substrate specificity for cis-unsaturated tricarboxylic acids. Catalyzes both the reversible dehydration of (R)-homocitrate ((R)-2-hydroxybutane-1,2,4-tricarboxylate) to produce cis-homoaconitate ((Z)-but-1-ene-1,2,4-tricarboxylate), and its hydration to homoisocitrate ((1R,2S)-1-hydroxybutane-1,2,4-tricarboxylate). Is also able to hydrate the analogous longer chain substrates cis-homo(2)-aconitate, cis-homo(3)-aconitate. These reactions are part of the biosynthesis pathway of coenzyme B. This Methanosarcina mazei (strain ATCC BAA-159 / DSM 3647 / Goe1 / Go1 / JCM 11833 / OCM 88) (Methanosarcina frisia) protein is Methanogen homoaconitase small subunit (hacB).